The chain runs to 290 residues: Eukaryotic translation initiation factor 3 subunit F-2 (290 aa).

Residues 12 to 150 (VRLQPLVLFQ…TRLYCGVTMG (139 aa)) enclose the MPN domain.

Belongs to the eIF-3 subunit F family. As to quaternary structure, component of the eukaryotic translation initiation factor 3 (eIF-3) complex. The eIF-3 complex interacts with pix.

The protein localises to the cytoplasm. In terms of biological role, component of the eukaryotic translation initiation factor 3 (eIF-3) complex, which is involved in protein synthesis of a specialized repertoire of mRNAs and, together with other initiation factors, stimulates binding of mRNA and methionyl-tRNAi to the 40S ribosome. The eIF-3 complex specifically targets and initiates translation of a subset of mRNAs involved in cell proliferation. This Drosophila virilis (Fruit fly) protein is Eukaryotic translation initiation factor 3 subunit F-2.